The sequence spans 78 residues: Large ribosomal subunit protein bL28 (78 aa).

The interval 1–24 (MSRVCQVTGKRPAVGNNRSHANNA) is disordered.

The protein belongs to the bacterial ribosomal protein bL28 family.

This is Large ribosomal subunit protein bL28 from Aeromonas salmonicida (strain A449).